The primary structure comprises 489 residues: Leukocyte immunoglobulin-like receptor subfamily A member 1 (489 aa).

A signal peptide spans 1–16 (MTPIVTVLICLRLSLG). Over 17-461 (PRTHVQAGTL…SHPQDYTVEN (445 aa)) the chain is Extracellular. Ig-like C2-type domains lie at 27–116 (PKPT…PLEL), 119–224 (TGAY…GVSK), 226–315 (PSLS…DPLD), and 326–415 (PFIS…SDSL). The cysteines at positions 49 and 98 are disulfide-linked. Asn-140 carries N-linked (GlcNAc...) asparagine glycosylation. Intrachain disulfides connect Cys-145/Cys-197, Cys-157/Cys-167, and Cys-246/Cys-297. 3 N-linked (GlcNAc...) asparagine glycosylation sites follow: Asn-281, Asn-302, and Asn-341. Cys-346 and Cys-397 are joined by a disulfide. Residues 425–453 (TLSPPQNKSDSKAGAANTLSPSQNKTASH) are disordered. N-linked (GlcNAc...) asparagine glycosylation is found at Asn-431 and Asn-448. Polar residues predominate over residues 441 to 453 (NTLSPSQNKTASH). Residues 462–482 (LIRMGIAGLVLVVLGILLFEA) form a helical membrane-spanning segment. Over 483–489 (QHSQRSL) the chain is Cytoplasmic.

As to expression, detected in monocytes and B-cells.

It is found in the membrane. In terms of biological role, may act as receptor for class I MHC antigens. The protein is Leukocyte immunoglobulin-like receptor subfamily A member 1 (LILRA1) of Homo sapiens (Human).